We begin with the raw amino-acid sequence, 459 residues long: Alpha,alpha-trehalose-phosphate synthase [UDP-forming] (459 aa).

Residues Tyr-86 and Asp-140 each coordinate D-glucose 6-phosphate. Positions 262 and 267 each coordinate UDP. Residues Arg-262 and Lys-267 each coordinate UDP-alpha-D-glucose. Arg-300 is a D-glucose 6-phosphate binding site. 361-369 (DGMNLVALE) is a UDP-alpha-D-glucose binding site. 365-369 (LVALE) contacts UDP.

Belongs to the glycosyltransferase 20 family. Component of the trehalose synthase complex.

It is found in the cytoplasm. It catalyses the reaction D-glucose 6-phosphate + UDP-alpha-D-glucose = alpha,alpha-trehalose 6-phosphate + UDP + H(+). Functionally, synthase catalytic subunit of the trehalose synthase complex that catalyzes the production of trehalose from glucose-6-phosphate and UDP-alpha-D-glucose in a two step process. Can function independently of the complex. The sequence is that of Alpha,alpha-trehalose-phosphate synthase [UDP-forming] (TPS1) from Encephalitozoon cuniculi (strain GB-M1) (Microsporidian parasite).